We begin with the raw amino-acid sequence, 92 residues long: MALLDYFLRKKEKQVTTASKAKERLQIIVAHERNSRNKQPDYLPQLTEDILKVLRKYIKVSDESFSINLDKKDGDLNVLELNIELHDEQTAD.

It belongs to the MinE family.

Prevents the cell division inhibition by proteins MinC and MinD at internal division sites while permitting inhibition at polar sites. This ensures cell division at the proper site by restricting the formation of a division septum at the midpoint of the long axis of the cell. In Colwellia psychrerythraea (strain 34H / ATCC BAA-681) (Vibrio psychroerythus), this protein is Cell division topological specificity factor.